Consider the following 118-residue polypeptide: V-type proton ATPase subunit G 3 (118 aa).

A compositionally biased stretch (polar residues) spans M1–L12. The segment at M1–T44 is disordered. Residues S5–K53 adopt a coiled-coil conformation. The span at A14–K26 shows a compositional bias: basic and acidic residues.

Belongs to the V-ATPase G subunit family. In terms of assembly, V-ATPase is a heteromultimeric enzyme made up of two complexes: the ATP-hydrolytic V1 complex and the proton translocation V0 complex. The V1 complex consists of three catalytic AB heterodimers that form a heterohexamer, three peripheral stalks each consisting of EG heterodimers, one central rotor including subunits D and F, and the regulatory subunits C and H. The proton translocation complex V0 consists of the proton transport subunit a, a ring of proteolipid subunits c9c'', rotary subunit d, subunits e and f, and the accessory subunits ATP6AP1/Ac45 and ATP6AP2/PRR. In terms of tissue distribution, kidney.

Functionally, subunit of the V1 complex of vacuolar(H+)-ATPase (V-ATPase), a multisubunit enzyme composed of a peripheral complex (V1) that hydrolyzes ATP and a membrane integral complex (V0) that translocates protons. V-ATPase is responsible for acidifying and maintaining the pH of intracellular compartments and in some cell types, is targeted to the plasma membrane, where it is responsible for acidifying the extracellular environment. The polypeptide is V-type proton ATPase subunit G 3 (Atp6v1g3) (Mus musculus (Mouse)).